A 357-amino-acid chain; its full sequence is Heme A synthase (357 aa).

A run of 5 helical transmembrane segments spans residues 24–44, 110–130, 140–160, 175–195, and 209–229; these read LVRYWLYAVFVVLIAIVMVGG, MLARFVGFLVAVPLAFFWVTG, MLGLLALGGLQGAIGWWMVAS, IHLTTACIIITAVFYIARGLV, and FAGWIVFAVLVQIYLGGLVAG. Histidine 272 serves as a coordination point for heme. 3 consecutive transmembrane segments (helical) span residues 274-294, 303-323, and 325-345; these read MFAYTVLVLTVLHSLQVWKQV, TIVLVGLVLIQAVIGIATLLM, and VPLHLGLTHQFFALIVLAFAV. Residue histidine 333 coordinates heme.

It belongs to the COX15/CtaA family. Type 2 subfamily. In terms of assembly, interacts with CtaB. Heme b is required as a cofactor.

Its subcellular location is the cell membrane. The catalysed reaction is Fe(II)-heme o + 2 A + H2O = Fe(II)-heme a + 2 AH2. It functions in the pathway porphyrin-containing compound metabolism; heme A biosynthesis; heme A from heme O: step 1/1. In terms of biological role, catalyzes the conversion of heme O to heme A by two successive hydroxylations of the methyl group at C8. The first hydroxylation forms heme I, the second hydroxylation results in an unstable dihydroxymethyl group, which spontaneously dehydrates, resulting in the formyl group of heme A. The protein is Heme A synthase of Brucella anthropi (strain ATCC 49188 / DSM 6882 / CCUG 24695 / JCM 21032 / LMG 3331 / NBRC 15819 / NCTC 12168 / Alc 37) (Ochrobactrum anthropi).